Consider the following 190-residue polypeptide: Ras-related protein RabF1 (190 aa).

15–22 (GDSGVGKT) lines the GTP pocket. Residues 37 to 44 (HITIGIEF) carry the Effector region motif. GTP is bound by residues 62–66 (DTAGE) and 119–122 (NKND). Cysteine 187 is subject to Cysteine methyl ester. Cysteine 187 carries the S-geranylgeranyl cysteine lipid modification. A propeptide spans 188–190 (IIN) (removed in mature form).

The protein belongs to the small GTPase superfamily. Rab family.

It localises to the cell membrane. The sequence is that of Ras-related protein RabF1 (rabF1-1) from Dictyostelium discoideum (Social amoeba).